The sequence spans 407 residues: Methylthioribose kinase (407 aa).

ATP contacts are provided by residues Asn-40, Lys-57, and 111–113 (EDL). Asp-229 provides a ligand contact to substrate. 246 to 248 (DAE) lines the ATP pocket. Substrate is bound at residue Arg-344.

This sequence belongs to the methylthioribose kinase family. In terms of assembly, homodimer.

The enzyme catalyses 5-(methylsulfanyl)-D-ribose + ATP = 5-(methylsulfanyl)-alpha-D-ribose 1-phosphate + ADP + H(+). The protein operates within amino-acid biosynthesis; L-methionine biosynthesis via salvage pathway; S-methyl-5-thio-alpha-D-ribose 1-phosphate from S-methyl-5'-thioadenosine (hydrolase route): step 2/2. Its function is as follows. Catalyzes the phosphorylation of methylthioribose into methylthioribose-1-phosphate. The sequence is that of Methylthioribose kinase from Yersinia pestis bv. Antiqua (strain Angola).